A 167-amino-acid polypeptide reads, in one-letter code: Crossover junction endodeoxyribonuclease RuvC (167 aa).

Residues aspartate 11, glutamate 71, and aspartate 143 contribute to the active site. Positions 11, 71, and 143 each coordinate Mg(2+).

It belongs to the RuvC family. As to quaternary structure, homodimer which binds Holliday junction (HJ) DNA. The HJ becomes 2-fold symmetrical on binding to RuvC with unstacked arms; it has a different conformation from HJ DNA in complex with RuvA. In the full resolvosome a probable DNA-RuvA(4)-RuvB(12)-RuvC(2) complex forms which resolves the HJ. Mg(2+) is required as a cofactor.

The protein resides in the cytoplasm. It catalyses the reaction Endonucleolytic cleavage at a junction such as a reciprocal single-stranded crossover between two homologous DNA duplexes (Holliday junction).. In terms of biological role, the RuvA-RuvB-RuvC complex processes Holliday junction (HJ) DNA during genetic recombination and DNA repair. Endonuclease that resolves HJ intermediates. Cleaves cruciform DNA by making single-stranded nicks across the HJ at symmetrical positions within the homologous arms, yielding a 5'-phosphate and a 3'-hydroxyl group; requires a central core of homology in the junction. The consensus cleavage sequence is 5'-(A/T)TT(C/G)-3'. Cleavage occurs on the 3'-side of the TT dinucleotide at the point of strand exchange. HJ branch migration catalyzed by RuvA-RuvB allows RuvC to scan DNA until it finds its consensus sequence, where it cleaves and resolves the cruciform DNA. This Bartonella bacilliformis (strain ATCC 35685 / KC583 / Herrer 020/F12,63) protein is Crossover junction endodeoxyribonuclease RuvC.